Reading from the N-terminus, the 298-residue chain is Small ribosomal subunit protein uS3 (298 aa).

Residues 39–107 form the KH type-2 domain; it reads VREYLKAKLK…PVAVNIEEVR (69 aa). The segment at 214–298 is disordered; the sequence is PAAVEARTDE…PAAAADGKGE (85 aa). The segment covering 219–245 has biased composition (basic and acidic residues); the sequence is ARTDEERRPRGPRRDDRGARPGADRPA. The segment covering 277–298 has biased composition (low complexity); the sequence is KPAVQRVRKVAAPAAAADGKGE.

Belongs to the universal ribosomal protein uS3 family. Part of the 30S ribosomal subunit. Forms a tight complex with proteins S10 and S14.

In terms of biological role, binds the lower part of the 30S subunit head. Binds mRNA in the 70S ribosome, positioning it for translation. The polypeptide is Small ribosomal subunit protein uS3 (Albidiferax ferrireducens (strain ATCC BAA-621 / DSM 15236 / T118) (Rhodoferax ferrireducens)).